A 337-amino-acid chain; its full sequence is tRNA N6-adenosine threonylcarbamoyltransferase (337 aa).

Residues histidine 111 and histidine 115 each coordinate Fe cation. Substrate contacts are provided by residues 134-138, aspartate 167, glycine 180, and asparagine 272; that span reads LVSGG. Aspartate 300 serves as a coordination point for Fe cation.

This sequence belongs to the KAE1 / TsaD family. Requires Fe(2+) as cofactor.

It localises to the cytoplasm. The catalysed reaction is L-threonylcarbamoyladenylate + adenosine(37) in tRNA = N(6)-L-threonylcarbamoyladenosine(37) in tRNA + AMP + H(+). Required for the formation of a threonylcarbamoyl group on adenosine at position 37 (t(6)A37) in tRNAs that read codons beginning with adenine. Is involved in the transfer of the threonylcarbamoyl moiety of threonylcarbamoyl-AMP (TC-AMP) to the N6 group of A37, together with TsaE and TsaB. TsaD likely plays a direct catalytic role in this reaction. The sequence is that of tRNA N6-adenosine threonylcarbamoyltransferase from Salmonella choleraesuis (strain SC-B67).